The chain runs to 474 residues: Homocitrate synthase, mitochondrial (474 aa).

The Pyruvate carboxyltransferase domain occupies Phe-67–Lys-320. Arg-75 contacts 2-oxoglutarate. Glu-76 serves as a coordination point for Mg(2+). His-135, Arg-195, and Thr-229 together coordinate 2-oxoglutarate. The Mg(2+) site is built by His-256 and His-258. Catalysis depends on His-353, which acts as the Proton acceptor.

This sequence belongs to the alpha-IPM synthase/homocitrate synthase family. Homocitrate synthase LYS20/LYS21 subfamily. Mg(2+) serves as cofactor. The cofactor is Mn(2+).

Its subcellular location is the mitochondrion. The catalysed reaction is acetyl-CoA + 2-oxoglutarate + H2O = (2R)-homocitrate + CoA + H(+). Its pathway is amino-acid biosynthesis; L-lysine biosynthesis via AAA pathway; L-alpha-aminoadipate from 2-oxoglutarate: step 1/5. Its function is as follows. Catalyzes the aldol-type condensation of 2-oxoglutarate with acetyl-CoA to yield homocitrate. Carries out the first step of the alpha-aminoadipate (AAA) lysine biosynthesis pathway. The sequence is that of Homocitrate synthase, mitochondrial (lys1) from Penicillium rubens (strain ATCC 28089 / DSM 1075 / NRRL 1951 / Wisconsin 54-1255) (Penicillium chrysogenum).